The following is a 404-amino-acid chain: RNA exonuclease 3 (404 aa).

An Exonuclease domain is found at 243 to 389 (VLSLDCEMAF…QDAIATMDVV (147 aa)).

Belongs to the REXO1/REXO3 family.

The protein localises to the cytoplasm. The protein resides in the nucleus. Its function is as follows. 3' to 5' exoribonuclease required for proper 3' end maturation of MRP RNA and of the U5L snRNA. This chain is RNA exonuclease 3 (REX3), found in Saccharomyces cerevisiae (strain ATCC 204508 / S288c) (Baker's yeast).